The chain runs to 416 residues: Gamma-glutamyl phosphate reductase (416 aa).

Belongs to the gamma-glutamyl phosphate reductase family.

The protein localises to the cytoplasm. The enzyme catalyses L-glutamate 5-semialdehyde + phosphate + NADP(+) = L-glutamyl 5-phosphate + NADPH + H(+). The protein operates within amino-acid biosynthesis; L-proline biosynthesis; L-glutamate 5-semialdehyde from L-glutamate: step 2/2. Its function is as follows. Catalyzes the NADPH-dependent reduction of L-glutamate 5-phosphate into L-glutamate 5-semialdehyde and phosphate. The product spontaneously undergoes cyclization to form 1-pyrroline-5-carboxylate. The chain is Gamma-glutamyl phosphate reductase from Salmonella typhi.